The sequence spans 746 residues: NAD(P)H-quinone oxidoreductase subunit 5, chloroplastic (746 aa).

16 helical membrane-spanning segments follow: residues 9 to 29 (YIILFLPLPVTMSIGFGLLFV), 40 to 60 (WAFVSVLLLSMVMGFSVNLAI), 88 to 108 (LIDPLTSIMSLLISTVGIMVL), 125 to 145 (FAYMSFFNTSMLGLVTSSNLI), 147 to 167 (IHIFWELVGMCSYLLIGFWFT), 185 to 205 (GDFGLLLGILGFYWITGSLEF), 225 to 245 (FAILCACLLFLGAVAKSAQFP), 258 to 278 (TPISALIHAATMVAAGIFLVA), 283 to 303 (LFIVIPYIMNLISLIGIITLL), 327 to 347 (LGYIMLALGIGSYRAALFHLI), 354 to 374 (ALLFLGSGSIIHSMEPVVGYS), 396 to 416 (TTFLLGTLSLCGIPPLACFWS), 425 to 445 (WLYSPIFAIIAYFTAGLTAFY), 554 to 574 (LFPLLVLVLFTLVVGLIGIPF), 610 to 630 (IFSVSVSLFGLFIASIFYGSV), and 726 to 746 (YLFLYLSYVSIFLIFYQYFDF).

Belongs to the complex I subunit 5 family. NDH is composed of at least 16 different subunits, 5 of which are encoded in the nucleus.

Its subcellular location is the plastid. The protein localises to the chloroplast thylakoid membrane. It carries out the reaction a plastoquinone + NADH + (n+1) H(+)(in) = a plastoquinol + NAD(+) + n H(+)(out). It catalyses the reaction a plastoquinone + NADPH + (n+1) H(+)(in) = a plastoquinol + NADP(+) + n H(+)(out). In terms of biological role, NDH shuttles electrons from NAD(P)H:plastoquinone, via FMN and iron-sulfur (Fe-S) centers, to quinones in the photosynthetic chain and possibly in a chloroplast respiratory chain. The immediate electron acceptor for the enzyme in this species is believed to be plastoquinone. Couples the redox reaction to proton translocation, and thus conserves the redox energy in a proton gradient. This chain is NAD(P)H-quinone oxidoreductase subunit 5, chloroplastic (ndhF), found in Dioscorea elephantipes (Elephant's foot yam).